We begin with the raw amino-acid sequence, 354 residues long: UDP-glucose 4-epimerase 1 (354 aa).

Residue 8 to 39 participates in NAD(+) binding; sequence TILVTGGAGYIGSHTVLQLLQLGFRVVVLDNL. Residue Ser133 participates in substrate binding. The active-site Proton acceptor is Tyr157.

This sequence belongs to the NAD(P)-dependent epimerase/dehydratase family. The cofactor is NAD(+).

It carries out the reaction UDP-alpha-D-glucose = UDP-alpha-D-galactose. The protein operates within carbohydrate metabolism; galactose metabolism. In terms of biological role, catalyzes the interconversion between UDP-glucose and UDP-galactose. The chain is UDP-glucose 4-epimerase 1 (UGE-1) from Oryza sativa subsp. japonica (Rice).